Here is a 147-residue protein sequence, read N- to C-terminus: Large ribosomal subunit protein uL13 (147 aa).

Belongs to the universal ribosomal protein uL13 family. Part of the 50S ribosomal subunit.

In terms of biological role, this protein is one of the early assembly proteins of the 50S ribosomal subunit, although it is not seen to bind rRNA by itself. It is important during the early stages of 50S assembly. The protein is Large ribosomal subunit protein uL13 of Corynebacterium diphtheriae (strain ATCC 700971 / NCTC 13129 / Biotype gravis).